The chain runs to 209 residues: Dof zinc finger protein DOF1.6 (209 aa).

Residues 1–17 (MPSEPNQTRPTRVQPST) show a composition bias toward polar residues. The interval 1-29 (MPSEPNQTRPTRVQPSTAAYPPPNLAEPL) is disordered. The segment covering 20–29 (YPPPNLAEPL) has biased composition (pro residues). A Dof-type zinc finger spans residues 29–83 (LPCPRCNSTTTKFCYYNNYNLAQPRYYCKSCRRYWTQGGTLRDVPVGGGTRRSSS). Residues Cys-31, Cys-34, Cys-56, and Cys-59 each contribute to the Zn(2+) site. The tract at residues 70–116 (RDVPVGGGTRRSSSKRHRSFSTTATSSSSSSSVITTTTQEPATTEAS) is disordered. Positions 89 to 116 (FSTTATSSSSSSSVITTTTQEPATTEAS) are enriched in low complexity.

It localises to the nucleus. Transcription factor that binds specifically to a 5'-AA[AG]G-3' consensus core sequence. This is Dof zinc finger protein DOF1.6 (DOF1.6) from Arabidopsis thaliana (Mouse-ear cress).